A 494-amino-acid chain; its full sequence is MSEANHKNIVVVGAGIIGTSVATMLSKVSPNWHIDMFERLEGAGIESSNENNNAGTGHAALCELNYTVEQDDGSIDASKAQEINEQFELSRQFWGNLVKNGDISNPEEFIQPLPHISFVMGPTNVNFLRKRYETLKTLPMFDTIEYTEDMETMRKWMPLMMENREPGHQMAASKIDEGTDVNYGALTRKLAHYLEQKSNVSLKYNHDVVDLTQREDGKWEVVVENRETKEKVTKIADKVFIGAGGHSIPLLQKSGVKQREHLGGFPISGQFLRCTNPDIIKQHAAKVYSKEPQGKPPMTVPHLDTRYINGKQTLLFGPYANIGPKFLKFGSNLDLFESIKPYNITTMLASAVKNVPLIKYSIDQMIKTKEGCMNYLRTFIPDAKDEDWELYTAGKRVQVIKDSEQHGKGFVVFGTEVVNSDDNSMIALLGESPGASTSLSVVLEVLEKNFADDKEAWEPVVKEMVPTYGRSLINDEKLMRETRRETSKNLHLNR.

Belongs to the MQO family. Requires FAD as cofactor.

The enzyme catalyses (S)-malate + a quinone = a quinol + oxaloacetate. It participates in carbohydrate metabolism; tricarboxylic acid cycle; oxaloacetate from (S)-malate (quinone route): step 1/1. In Staphylococcus epidermidis (strain ATCC 12228 / FDA PCI 1200), this protein is Probable malate:quinone oxidoreductase 3.